The chain runs to 128 residues: Sulfurtransferase TusD (128 aa).

Cys-78 serves as the catalytic Cysteine persulfide intermediate.

The protein belongs to the DsrE/TusD family. Heterohexamer, formed by a dimer of trimers. The hexameric TusBCD complex contains 2 copies each of TusB, TusC and TusD. The TusBCD complex interacts with TusE.

It localises to the cytoplasm. In terms of biological role, part of a sulfur-relay system required for 2-thiolation of 5-methylaminomethyl-2-thiouridine (mnm(5)s(2)U) at tRNA wobble positions. Accepts sulfur from TusA and transfers it in turn to TusE. The chain is Sulfurtransferase TusD from Klebsiella pneumoniae (strain 342).